Reading from the N-terminus, the 377-residue chain is Queuine tRNA-ribosyltransferase (377 aa).

The Proton acceptor role is filled by aspartate 89. Substrate-binding positions include 89–93 (DSGGF), aspartate 143, glutamine 187, and glycine 214. The RNA binding stretch occupies residues 245–251 (GVGKPED). Aspartate 264 functions as the Nucleophile in the catalytic mechanism. Positions 269 to 273 (TRNAR) are RNA binding; important for wobble base 34 recognition. Cysteine 302, cysteine 304, cysteine 307, and histidine 333 together coordinate Zn(2+).

The protein belongs to the queuine tRNA-ribosyltransferase family. In terms of assembly, homodimer. Within each dimer, one monomer is responsible for RNA recognition and catalysis, while the other monomer binds to the replacement base PreQ1. The cofactor is Zn(2+).

The catalysed reaction is 7-aminomethyl-7-carbaguanine + guanosine(34) in tRNA = 7-aminomethyl-7-carbaguanosine(34) in tRNA + guanine. Its pathway is tRNA modification; tRNA-queuosine biosynthesis. Functionally, catalyzes the base-exchange of a guanine (G) residue with the queuine precursor 7-aminomethyl-7-deazaguanine (PreQ1) at position 34 (anticodon wobble position) in tRNAs with GU(N) anticodons (tRNA-Asp, -Asn, -His and -Tyr). Catalysis occurs through a double-displacement mechanism. The nucleophile active site attacks the C1' of nucleotide 34 to detach the guanine base from the RNA, forming a covalent enzyme-RNA intermediate. The proton acceptor active site deprotonates the incoming PreQ1, allowing a nucleophilic attack on the C1' of the ribose to form the product. After dissociation, two additional enzymatic reactions on the tRNA convert PreQ1 to queuine (Q), resulting in the hypermodified nucleoside queuosine (7-(((4,5-cis-dihydroxy-2-cyclopenten-1-yl)amino)methyl)-7-deazaguanosine). The sequence is that of Queuine tRNA-ribosyltransferase from Shewanella halifaxensis (strain HAW-EB4).